The primary structure comprises 692 residues: Protein arginine N-methyltransferase 7 (692 aa).

2 consecutive SAM-dependent MTase PRMT-type domains span residues 14–345 and 358–684; these read SLEW…YCVW and EVYQ…ITME. At R32 the chain carries Omega-N-methylarginine. Active-site residues include E144 and E153.

It belongs to the class I-like SAM-binding methyltransferase superfamily. Protein arginine N-methyltransferase family. PRMT7 subfamily. In terms of assembly, interacts with CTCFL, PRMT5 and SNRPD3. Homodimer and heterodimer.

The protein localises to the cytoplasm. Its subcellular location is the nucleus. The catalysed reaction is L-arginyl-[protein] + S-adenosyl-L-methionine = N(omega)-methyl-L-arginyl-[protein] + S-adenosyl-L-homocysteine + H(+). Arginine methyltransferase that can both catalyze the formation of omega-N monomethylarginine (MMA) and symmetrical dimethylarginine (sDMA), with a preference for the formation of MMA. Specifically mediates the symmetrical dimethylation of arginine residues in the small nuclear ribonucleoproteins Sm D1 (SNRPD1) and Sm D3 (SNRPD3); such methylation being required for the assembly and biogenesis of snRNP core particles. Specifically mediates the symmetric dimethylation of histone H4 'Arg-3' to form H4R3me2s. Plays a role in gene imprinting by being recruited by CTCFL at the H19 imprinted control region (ICR) and methylating histone H4 to form H4R3me2s, possibly leading to recruit DNA methyltransferases at these sites. May also play a role in embryonic stem cell (ESC) pluripotency. Also able to mediate the arginine methylation of histone H2A and myelin basic protein (MBP) in vitro; the relevance of such results is however unclear in vivo. This Cricetulus longicaudatus (Long-tailed dwarf hamster) protein is Protein arginine N-methyltransferase 7 (Prmt7).